Reading from the N-terminus, the 359-residue chain is tRNA-specific 2-thiouridylase MnmA (359 aa).

ATP is bound by residues 9–16 (GISGGVDS) and Met35. The segment at 95–97 (NPD) is interaction with target base in tRNA. Cys100 serves as the catalytic Nucleophile. The cysteines at positions 100 and 197 are disulfide-linked. Gly124 contacts ATP. The interaction with tRNA stretch occupies residues 147 to 149 (KDQ). Catalysis depends on Cys197, which acts as the Cysteine persulfide intermediate. The tract at residues 309–310 (RY) is interaction with tRNA.

Belongs to the MnmA/TRMU family.

The protein localises to the cytoplasm. It carries out the reaction S-sulfanyl-L-cysteinyl-[protein] + uridine(34) in tRNA + AH2 + ATP = 2-thiouridine(34) in tRNA + L-cysteinyl-[protein] + A + AMP + diphosphate + H(+). Functionally, catalyzes the 2-thiolation of uridine at the wobble position (U34) of tRNA, leading to the formation of s(2)U34. The chain is tRNA-specific 2-thiouridylase MnmA from Francisella tularensis subsp. holarctica (strain FTNF002-00 / FTA).